The following is a 470-amino-acid chain: Siroheme synthase 2 (470 aa).

The segment at 1–202 is precorrin-2 dehydrogenase /sirohydrochlorin ferrochelatase; sequence MDYLPMFAKL…EDWQGAEQWL (202 aa). NAD(+)-binding positions include 22-23 and 43-44; these read EV and PE. A Phosphoserine modification is found at Ser-126. Residues 214 to 470 are uroporphyrinogen-III C-methyltransferase; it reads GEVVLVGAGP…TCDLKLVSLA (257 aa). Pro-223 serves as a coordination point for S-adenosyl-L-methionine. Catalysis depends on Asp-246, which acts as the Proton acceptor. Lys-268 acts as the Proton donor in catalysis. S-adenosyl-L-methionine is bound by residues 299 to 301, 329 to 330, Met-381, and Gly-410; these read GGD and TA.

In the N-terminal section; belongs to the precorrin-2 dehydrogenase / sirohydrochlorin ferrochelatase family. The protein in the C-terminal section; belongs to the precorrin methyltransferase family.

It carries out the reaction uroporphyrinogen III + 2 S-adenosyl-L-methionine = precorrin-2 + 2 S-adenosyl-L-homocysteine + H(+). The catalysed reaction is precorrin-2 + NAD(+) = sirohydrochlorin + NADH + 2 H(+). It catalyses the reaction siroheme + 2 H(+) = sirohydrochlorin + Fe(2+). It functions in the pathway cofactor biosynthesis; adenosylcobalamin biosynthesis; precorrin-2 from uroporphyrinogen III: step 1/1. Its pathway is cofactor biosynthesis; adenosylcobalamin biosynthesis; sirohydrochlorin from precorrin-2: step 1/1. The protein operates within porphyrin-containing compound metabolism; siroheme biosynthesis; precorrin-2 from uroporphyrinogen III: step 1/1. It participates in porphyrin-containing compound metabolism; siroheme biosynthesis; siroheme from sirohydrochlorin: step 1/1. It functions in the pathway porphyrin-containing compound metabolism; siroheme biosynthesis; sirohydrochlorin from precorrin-2: step 1/1. In terms of biological role, multifunctional enzyme that catalyzes the SAM-dependent methylations of uroporphyrinogen III at position C-2 and C-7 to form precorrin-2 via precorrin-1. Then it catalyzes the NAD-dependent ring dehydrogenation of precorrin-2 to yield sirohydrochlorin. Finally, it catalyzes the ferrochelation of sirohydrochlorin to yield siroheme. This chain is Siroheme synthase 2, found in Aeromonas hydrophila subsp. hydrophila (strain ATCC 7966 / DSM 30187 / BCRC 13018 / CCUG 14551 / JCM 1027 / KCTC 2358 / NCIMB 9240 / NCTC 8049).